The sequence spans 516 residues: Cytochrome P450 monooxygenase otaC (516 aa).

Residues 13–30 traverse the membrane as a helical segment; sequence FLWTAFAVGVVYCCTRMV. Cys-454 contributes to the heme binding site.

It belongs to the cytochrome P450 family. Requires heme as cofactor.

It is found in the membrane. The catalysed reaction is 7-methylmellein + 3 reduced [NADPH--hemoprotein reductase] + 3 O2 = 7-carboxymellein + 3 oxidized [NADPH--hemoprotein reductase] + 4 H2O + 4 H(+). It participates in mycotoxin biosynthesis. Cytochrome P450 monooxygenase; part of the gene cluster that mediates the biosynthesis of ochratoxin A (OTA), a mycotoxin composed of a chlorinated type I polyketide dihydroisocoumarin moiety linked to L-phenylalanine, and demonstrated to have nephrotoxic, immunotoxic, genotoxic, neurotoxic, and teratogenic properties. OtaC catalyzes the oxidation of 7-methylmellein (7-MM) into 7-carboxymellein. The pathway begins with the highly reducing polyketide synthase otaA that catalyzes the formation of the isocoumarin group during the initial stages of biosynthesis, starting from one acetate and 4 malonate units, to originate the characteristic pentaketide skeleton 7-methylmellein (7-MM) of the OTA molecule. The newly identified cyclase otaY might be involved in the polyketide cyclization reaction during the initial steps of the OTA biosynthesis. 7-MM is then oxidized into 7-carboxymellein (also called ochratoxin beta) by the cytochrome P450 monooxygenase otaC. The NRPS encoded by the otaB gene is involved in the linking of phenylalanine to the dihydroisocoumarin ring. The reaction catalyzed by NRPS results in the production of ochratoxin B (OTB), which is the non-chlorinated analog of OTA and which subsequently serves as the substrate of the halogenase otaD for chlorination activity to form the final molecular structure of OTA, containing a chlorine atom in the C-5 position of the molecule. This chain is Cytochrome P450 monooxygenase otaC, found in Aspergillus carbonarius (strain ITEM 5010).